The primary structure comprises 567 residues: Urease subunit alpha (567 aa).

3 residues coordinate Ni(2+): His-134, His-136, and Lys-217. Lys-217 carries the N6-carboxylysine modification. Residue His-219 coordinates substrate. 2 residues coordinate Ni(2+): His-246 and His-272. His-320 acts as the Proton donor in catalysis. Asp-360 lines the Ni(2+) pocket.

This sequence belongs to the metallo-dependent hydrolases superfamily. Urease alpha subunit family. In terms of assembly, heterotrimer of UreA (gamma), UreB (beta) and UreC (alpha) subunits. Three heterotrimers associate to form the active enzyme. Requires Ni cation as cofactor. In terms of processing, carboxylation allows a single lysine to coordinate two nickel ions.

It is found in the cytoplasm. The catalysed reaction is urea + 2 H2O + H(+) = hydrogencarbonate + 2 NH4(+). The protein operates within nitrogen metabolism; urea degradation; CO(2) and NH(3) from urea (urease route): step 1/1. This Polynucleobacter asymbioticus (strain DSM 18221 / CIP 109841 / QLW-P1DMWA-1) (Polynucleobacter necessarius subsp. asymbioticus) protein is Urease subunit alpha.